We begin with the raw amino-acid sequence, 432 residues long: C-type cytochrome OmcS (432 aa).

A signal peptide spans 1–25 (MKKGMKVSLSVAAAALLMSAPAAFA).

Requires heme as cofactor.

The protein localises to the cell outer membrane. Its subcellular location is the cell surface. Its function is as follows. Plays an important role in extracellular electron transfer. Can transfer electrons to insoluble Fe(3+) oxides as well as other extracellular electron acceptors, including Mn(4+) oxide and humic substances. Essential for direct interspecies electron transfer (DIET) in cocultures with G.metallireducens. The protein is C-type cytochrome OmcS of Geobacter sulfurreducens (strain ATCC 51573 / DSM 12127 / PCA).